A 1755-amino-acid polypeptide reads, in one-letter code: Transposon Ty1-ML1 Gag-Pol polyprotein (1755 aa).

Polar residues-rich tracts occupy residues 1–23, 48–60, and 127–152; these read MESQ…SVTS, TKAN…TPAS, and QSQF…GNTF. Disordered regions lie at residues 1 to 88, 126 to 173, and 352 to 421; these read MESQ…YPQQ, PQSQ…RPPP, and GSRN…SKST. Residues 153–165 are compositionally biased toward low complexity; the sequence is TDSSSADSDMTST. The interval 299–401 is RNA-binding; it reads NNGIHINNKV…NSKSKTARAH (103 aa). Residues 402-418 are compositionally biased toward low complexity; that stretch reads NVSTSNNSPSTDNDSIS. D461 acts as the For protease activity; shared with dimeric partner in catalysis. Residues 583–640 are integrase-type zinc finger-like; it reads NVHTSESTRKYPYPFIHRMLAHANAQTIRYSLKNNTITYFNESDVDWSSAIDYQCPDC. The Integrase catalytic domain occupies 660–835; it reads NSYEPFQYLH…AGLDISTLLP (176 aa). 2 residues coordinate Mg(2+): D671 and D736. Disordered stretches follow at residues 956 to 1087, 1092 to 1111, and 1130 to 1171; these read SKAV…ETEK, RSPS…NIVP, and DLPL…DSNA. Residues 960-969 are compositionally biased toward low complexity; the sequence is SPTDSTPPST. The segment covering 1005-1015 has biased composition (polar residues); the sequence is STPQISNIEST. Positions 1038–1053 are enriched in basic and acidic residues; sequence ESSHASKSKDFRHSDS. 2 stretches are compositionally biased toward polar residues: residues 1054-1082 and 1101-1111; these read YSEN…QISD and PENNSSHNIVP. A Bipartite nuclear localization signal motif is present at residues 1178-1212; the sequence is KKRSLEDNETEIKVSRDTWNTKNMRSLEPPRSKKR. The Reverse transcriptase Ty1/copia-type domain maps to 1338-1476; sequence NNYYITQLDI…DILGLEIKYQ (139 aa). 6 residues coordinate Mg(2+): D1346, D1427, D1428, D1610, E1652, and D1685. Residues 1610–1752 enclose the RNase H Ty1/copia-type domain; that stretch reads DASYGNQPYY…IKTFKLLTNK (143 aa).

In terms of assembly, the capsid protein forms a homotrimer, from which the VLPs are assembled. The protease is a homodimer, whose active site consists of two apposed aspartic acid residues. Initially, virus-like particles (VLPs) are composed of the structural unprocessed proteins Gag and Gag-Pol, and also contain the host initiator methionine tRNA (tRNA(i)-Met) which serves as a primer for minus-strand DNA synthesis, and a dimer of genomic Ty RNA. Processing of the polyproteins occurs within the particle and proceeds by an ordered pathway, called maturation. First, the protease (PR) is released by autocatalytic cleavage of the Gag-Pol polyprotein yielding capsid protein p45 and a Pol-p154 precursor protein. This cleavage is a prerequisite for subsequent processing of Pol-p154 at the remaining sites to release the mature structural and catalytic proteins. Maturation takes place prior to the RT reaction and is required to produce transposition-competent VLPs.

It localises to the cytoplasm. The protein resides in the nucleus. The enzyme catalyses DNA(n) + a 2'-deoxyribonucleoside 5'-triphosphate = DNA(n+1) + diphosphate. The catalysed reaction is Endonucleolytic cleavage to 5'-phosphomonoester.. Its function is as follows. Capsid protein (CA) is the structural component of the virus-like particle (VLP), forming the shell that encapsulates the retrotransposons dimeric RNA genome. The particles are assembled from trimer-clustered units and there are holes in the capsid shells that allow for the diffusion of macromolecules. CA also has nucleocapsid-like chaperone activity, promoting primer tRNA(i)-Met annealing to the multipartite primer-binding site (PBS), dimerization of Ty1 RNA and initiation of reverse transcription. Functionally, the aspartyl protease (PR) mediates the proteolytic cleavages of the Gag and Gag-Pol polyproteins after assembly of the VLP. In terms of biological role, reverse transcriptase/ribonuclease H (RT) is a multifunctional enzyme that catalyzes the conversion of the retro-elements RNA genome into dsDNA within the VLP. The enzyme displays a DNA polymerase activity that can copy either DNA or RNA templates, and a ribonuclease H (RNase H) activity that cleaves the RNA strand of RNA-DNA heteroduplexes during plus-strand synthesis and hydrolyzes RNA primers. The conversion leads to a linear dsDNA copy of the retrotransposon that includes long terminal repeats (LTRs) at both ends. Integrase (IN) targets the VLP to the nucleus, where a subparticle preintegration complex (PIC) containing at least integrase and the newly synthesized dsDNA copy of the retrotransposon must transit the nuclear membrane. Once in the nucleus, integrase performs the integration of the dsDNA into the host genome. The chain is Transposon Ty1-ML1 Gag-Pol polyprotein (TY1B-ML1) from Saccharomyces cerevisiae (strain ATCC 204508 / S288c) (Baker's yeast).